Reading from the N-terminus, the 226-residue chain is Pre-mRNA-splicing factor SPF27 (226 aa).

N-acetylalanine is present on Ala2. Ser94 is modified (phosphoserine). Residues 139–223 (YNENLVHMIE…HGEANKENIR (85 aa)) adopt a coiled-coil conformation.

This sequence belongs to the SPF27 family. As to quaternary structure, component of the pre-catalytic and catalytic spliceosome complexes. Component of the postcatalytic spliceosome P complex. Component of the PRP19-CDC5L splicing complex composed of a core complex comprising a homotetramer of PRPF19, CDC5L, PLRG1 and BCAS2, and at least three less stably associated proteins CTNNBL1, CWC15 and HSPA8. Interacts directly in the complex with PRPF19, CDC5L and PLRG1.

The protein resides in the nucleus. The protein localises to the nucleolus. Functionally, required for pre-mRNA splicing as component of the activated spliceosome. Component of the PRP19-CDC5L complex that forms an integral part of the spliceosome and is required for activating pre-mRNA splicing. May have a scaffolding role in the spliceosome assembly as it contacts all other components of the core complex. The PRP19-CDC5L complex may also play a role in the response to DNA damage (DDR). The polypeptide is Pre-mRNA-splicing factor SPF27 (BCAS2) (Pongo abelii (Sumatran orangutan)).